We begin with the raw amino-acid sequence, 271 residues long: Formamidopyrimidine-DNA glycosylase (271 aa).

The Schiff-base intermediate with DNA role is filled by proline 2. Residue glutamate 3 is the Proton donor of the active site. The active-site Proton donor; for beta-elimination activity is the lysine 58. Histidine 90, arginine 108, and arginine 151 together coordinate DNA. An FPG-type; degenerate zinc finger spans residues 236 to 271; it reads QVYGRDGQPCHRDDGGTIRRFAQGGRSTWYCPRCQR. Arginine 261 functions as the Proton donor; for delta-elimination activity in the catalytic mechanism.

This sequence belongs to the FPG family. In terms of assembly, monomer. Requires Zn(2+) as cofactor.

The enzyme catalyses Hydrolysis of DNA containing ring-opened 7-methylguanine residues, releasing 2,6-diamino-4-hydroxy-5-(N-methyl)formamidopyrimidine.. It carries out the reaction 2'-deoxyribonucleotide-(2'-deoxyribose 5'-phosphate)-2'-deoxyribonucleotide-DNA = a 3'-end 2'-deoxyribonucleotide-(2,3-dehydro-2,3-deoxyribose 5'-phosphate)-DNA + a 5'-end 5'-phospho-2'-deoxyribonucleoside-DNA + H(+). Functionally, involved in base excision repair of DNA damaged by oxidation or by mutagenic agents. Acts as a DNA glycosylase that recognizes and removes damaged bases. Has a preference for oxidized purines, such as 7,8-dihydro-8-oxoguanine (8-oxoG). Has AP (apurinic/apyrimidinic) lyase activity and introduces nicks in the DNA strand. Cleaves the DNA backbone by beta-delta elimination to generate a single-strand break at the site of the removed base with both 3'- and 5'-phosphates. The polypeptide is Formamidopyrimidine-DNA glycosylase (Erythrobacter litoralis (strain HTCC2594)).